The sequence spans 377 residues: Succinyl-diaminopimelate desuccinylase (377 aa).

Position 68 (His-68) interacts with Zn(2+). Asp-70 is a catalytic residue. Residue Asp-101 coordinates Zn(2+). The active-site Proton acceptor is the Glu-135. Positions 136, 164, and 350 each coordinate Zn(2+).

It belongs to the peptidase M20A family. DapE subfamily. Homodimer. Zn(2+) is required as a cofactor. Co(2+) serves as cofactor.

The catalysed reaction is N-succinyl-(2S,6S)-2,6-diaminopimelate + H2O = (2S,6S)-2,6-diaminopimelate + succinate. It participates in amino-acid biosynthesis; L-lysine biosynthesis via DAP pathway; LL-2,6-diaminopimelate from (S)-tetrahydrodipicolinate (succinylase route): step 3/3. Its function is as follows. Catalyzes the hydrolysis of N-succinyl-L,L-diaminopimelic acid (SDAP), forming succinate and LL-2,6-diaminopimelate (DAP), an intermediate involved in the bacterial biosynthesis of lysine and meso-diaminopimelic acid, an essential component of bacterial cell walls. This chain is Succinyl-diaminopimelate desuccinylase, found in Acinetobacter baumannii (strain AB0057).